A 264-amino-acid chain; its full sequence is uncharacterized protein (264 aa).

Residues 3-243 form the ABC transporter domain; that stretch reads LQLDNVSLKR…QILSAFFDTP (241 aa). 35-42 serves as a coordination point for ATP; sequence GLNGAGKT.

The protein belongs to the ABC transporter superfamily.

This is an uncharacterized protein from Bacillus subtilis (strain 168).